We begin with the raw amino-acid sequence, 253 residues long: Geranylgeranylglyceryl phosphate synthase (253 aa).

Mg(2+) contacts are provided by D28 and S53. Sn-glycerol 1-phosphate-binding positions include 172–178 (YLEAGSG), 203–204 (GG), and 225–226 (GN).

Belongs to the GGGP/HepGP synthase family. Group II subfamily. It depends on Mg(2+) as a cofactor.

It is found in the cytoplasm. It carries out the reaction sn-glycerol 1-phosphate + (2E,6E,10E)-geranylgeranyl diphosphate = sn-3-O-(geranylgeranyl)glycerol 1-phosphate + diphosphate. It functions in the pathway membrane lipid metabolism; glycerophospholipid metabolism. In terms of biological role, prenyltransferase that catalyzes the transfer of the geranylgeranyl moiety of geranylgeranyl diphosphate (GGPP) to the C3 hydroxyl of sn-glycerol-1-phosphate (G1P). This reaction is the first ether-bond-formation step in the biosynthesis of archaeal membrane lipids. This Methanocaldococcus jannaschii (strain ATCC 43067 / DSM 2661 / JAL-1 / JCM 10045 / NBRC 100440) (Methanococcus jannaschii) protein is Geranylgeranylglyceryl phosphate synthase.